Here is a 1431-residue protein sequence, read N- to C-terminus: Stabilin-2 (1431 aa).

Over 1–1322 the chain is Extracellular; sequence SLPSLLTRLE…PPTAATAAHS (1322 aa). The region spanning 2–130 is the FAS1 domain; sequence LPSLLTRLEQ…GVIHGLEKVL (129 aa). N-linked (GlcNAc...) asparagine glycosylation is found at N112 and N140. One can recognise a Laminin EGF-like 1 domain in the interval 207 to 272; it reads PQCQACPGRG…CSCVHGRCSQ (66 aa). 18 disulfide bridges follow: C212-C226, C220-C236, C238-C247, C259-C270, C263-C280, C282-C291, C300-C310, C304-C320, C322-C333, C339-C352, C346-C362, C364-C375, C381-C394, C388-C404, C406-C417, C423-C436, C430-C446, and C448-C459. Residues N231 and N243 are each glycosylated (N-linked (GlcNAc...) asparagine). EGF-like domains are found at residues 296 to 334, 335 to 376, 377 to 418, and 419 to 460; these read TTDN…TVCT, AINA…IVCL, EINP…KVCS, and LINV…IVCR. An N-linked (GlcNAc...) asparagine glycan is attached at N301. Residue N329 is glycosylated (N-linked (GlcNAc...) asparagine). A glycan (N-linked (GlcNAc...) asparagine) is linked at N437. FAS1 domains lie at 460 to 588 and 604 to 745; these read RGSI…DKLL and VLQN…DCLL. A glycan (N-linked (GlcNAc...) asparagine) is linked at N607. The region spanning 822-887 is the Laminin EGF-like 2 domain; sequence PDCQACPGGP…SCSEHGQCDE (66 aa). 6 disulfides stabilise this stretch: C827–C841, C835–C851, C853–C862, C874–C885, C879–C895, and C897–C906. Residue N858 is glycosylated (N-linked (GlcNAc...) asparagine). Residue N929 is glycosylated (N-linked (GlcNAc...) asparagine). 2 EGF-like domains span residues 947–987 and 988–1030; these read VVDF…YSCI and EIDP…VDCE. Disulfide bonds link C951/C964, C958/C973, C975/C986, C992/C1006, C1000/C1016, C1018/C1029, C1085/C1154, and C1109/C1130. The Link domain maps to 1063–1156; it reads GVFHLRSPLG…SEMWDVFCYR (94 aa). N-linked (GlcNAc...) asparagine glycosylation is found at N1145, N1161, N1233, N1249, and N1258. One can recognise an FAS1 4 domain in the interval 1176–1310; sequence SGNLLQVLMS…GILHIISEPL (135 aa). The helical transmembrane segment at 1323-1343 threads the bilayer; that stretch reads GLGTGIFCAVVLVTGAIALAA. Over 1344 to 1431 the chain is Cytoplasmic; sequence YSYFRLKQRT…QQATTVTVPR (88 aa). The tract at residues 1368–1378 is interaction with TMSB4X; sequence WLLASSSPRIS.

In terms of assembly, interacts with GULP1, heparin, alpha-M/beta-2 integrin (ITGAM and ITGB2), and thymosin beta 4 (TMSB4X). Post-translationally, glycosylated. In terms of processing, proteolytically processed to yield a 175 kDa protein. As to expression, initially expressed in all vascular cells, including those of sinusoidal-like structures, vitellin veins, and hepatic veins or sinus venosus, in E13.5 fetal liver. The expression then progressively disappears in the portal and hepatic veins, but the expression in sinusoidals endothelial cells (SECs) is retained and becomes stronger during development.

It is found in the cytoplasm. Its subcellular location is the cell membrane. Phosphatidylserine receptor that enhances the engulfment of apoptotic cells. Hyaluronan receptor that binds to and mediates endocytosis of hyaluronic acid (HA). Also acts, in different species, as a primary systemic scavenger receptor for heparin (Hep), chondroitin sulfate (CS), dermatan sulfate (DS), nonglycosaminoglycan (GAG), acetylated low-density lipoprotein (AcLDL), pro-collagen propeptides and advanced glycation end products (AGE). May serve to maintain tissue integrity by supporting extracellular matrix turnover or it may contribute to maintaining fluidity of bodily liquids by resorption of hyaluronan. Counter receptor which plays an important role in lymphocyte recruitment in the hepatic vasculature. Binds to both Gram-positive and Gram-negative bacteria and may play a role in defense against bacterial infection. The proteolytically processed 175 kDa form also functions as an endocytosis receptor for heparin internalization as well as HA and CS. The sequence is that of Stabilin-2 from Rattus norvegicus (Rat).